The following is a 143-amino-acid chain: Large ribosomal subunit protein uL11 (143 aa).

The protein belongs to the universal ribosomal protein uL11 family. Part of the ribosomal stalk of the 50S ribosomal subunit. Interacts with L10 and the large rRNA to form the base of the stalk. L10 forms an elongated spine to which L12 dimers bind in a sequential fashion forming a multimeric L10(L12)X complex. One or more lysine residues are methylated.

Forms part of the ribosomal stalk which helps the ribosome interact with GTP-bound translation factors. This chain is Large ribosomal subunit protein uL11, found in Treponema denticola (strain ATCC 35405 / DSM 14222 / CIP 103919 / JCM 8153 / KCTC 15104).